The primary structure comprises 228 residues: 2,3-bisphosphoglycerate-dependent phosphoglycerate mutase (228 aa).

Substrate is bound by residues 8–15 (RHGQSVWN), 21–22 (SG), arginine 58, 111–114 (ERMY), lysine 122, 138–139 (RR), and 182–183 (GN). Residue histidine 9 is the Tele-phosphohistidine intermediate of the active site. Glutamate 111 functions as the Proton donor/acceptor in the catalytic mechanism.

This sequence belongs to the phosphoglycerate mutase family. BPG-dependent PGAM subfamily.

It catalyses the reaction (2R)-2-phosphoglycerate = (2R)-3-phosphoglycerate. It functions in the pathway carbohydrate degradation; glycolysis; pyruvate from D-glyceraldehyde 3-phosphate: step 3/5. Its function is as follows. Catalyzes the interconversion of 2-phosphoglycerate and 3-phosphoglycerate. The protein is 2,3-bisphosphoglycerate-dependent phosphoglycerate mutase of Chlamydia pneumoniae (Chlamydophila pneumoniae).